A 239-amino-acid polypeptide reads, in one-letter code: MVEPKYKRVILKLSGEALGGEKGFGIDWEVVESIAEEISKVRELGVEVAIVVGGGNFFRGRSAEHIDRATADYMGMLATVINSLALQSILEKRGIPTRVQSAIEMRQIAEPYIRRRAIRHLEKGRVVIFACGTGNPFFSTDTAAALRAAEIDAEAILLAKKVDGVYDSDPKKNPNAKKYDFITYLDVINQRLEVMDSTATSMCMDNQIPIVVFELAKGNIIKAVMGENIGTLVNVKEER.

12-15 (KLSG) lines the ATP pocket. Residues 20–25 (GEKGFG) form an involved in allosteric activation by GTP region. Glycine 54 contributes to the UMP binding site. ATP-binding residues include glycine 55 and arginine 59. UMP-binding positions include aspartate 72 and 133–140 (TGNPFFST). ATP contacts are provided by tyrosine 166 and aspartate 169.

This sequence belongs to the UMP kinase family. Homohexamer.

The protein resides in the cytoplasm. It catalyses the reaction UMP + ATP = UDP + ADP. It participates in pyrimidine metabolism; CTP biosynthesis via de novo pathway; UDP from UMP (UMPK route): step 1/1. Its activity is regulated as follows. Allosterically activated by GTP. Inhibited by UTP. In terms of biological role, catalyzes the reversible phosphorylation of UMP to UDP. In Caldicellulosiruptor saccharolyticus (strain ATCC 43494 / DSM 8903 / Tp8T 6331), this protein is Uridylate kinase.